Consider the following 79-residue polypeptide: Conotoxin Vi6.3 (79 aa).

Residues 1-22 (MKLTCVLIITVLFLTASQLITA) form the signal peptide. The propeptide occupies 23 to 47 (DYSRDQRQYRAVRLGDEMRNFKGAR). Intrachain disulfides connect C49-C62, C56-C67, and C61-C77. A 4-hydroxyproline mark is found at P60 and P63.

It belongs to the conotoxin O1 superfamily. As to expression, expressed by the venom duct.

It localises to the secreted. Its function is as follows. Ion channel inhibitor that inhibits the increase in intracellular calcium upon depolarization in DRG neurons. In vivo, both intraperitoneal and intracranial injections into mice induce hyperactivity. The sequence is that of Conotoxin Vi6.3 from Conus virgo (Virgin cone).